The sequence spans 489 residues: Rhamnulokinase (489 aa).

Position 13-17 (13-17) interacts with ATP; it reads ASSGR. An intrachain disulfide couples cysteine 68 to cysteine 222. Residues glycine 83 and 236–238 each bind substrate; that span reads HDT. Aspartate 237 (proton acceptor) is an active-site residue. Threonine 259 is an ATP binding site. Asparagine 296 lines the substrate pocket. Glutamine 304 serves as a coordination point for ATP. An intrachain disulfide couples cysteine 353 to cysteine 370. Glycine 402 provides a ligand contact to ATP. Cysteine 413 and cysteine 417 are disulfide-bonded.

It belongs to the rhamnulokinase family. In terms of assembly, monomer. Mg(2+) is required as a cofactor.

It catalyses the reaction L-rhamnulose + ATP = L-rhamnulose 1-phosphate + ADP + H(+). The protein operates within carbohydrate degradation; L-rhamnose degradation; glycerone phosphate from L-rhamnose: step 2/3. Involved in the catabolism of L-rhamnose (6-deoxy-L-mannose). Catalyzes the transfer of the gamma-phosphate group from ATP to the 1-hydroxyl group of L-rhamnulose to yield L-rhamnulose 1-phosphate. In Escherichia coli (strain K12 / DH10B), this protein is Rhamnulokinase.